We begin with the raw amino-acid sequence, 132 residues long: Fatty acid-binding protein, adipocyte (132 aa).

Residue Cys-2 is modified to N-acetylcysteine. At Ser-13 the chain carries Phosphoserine. Position 20 is a phosphotyrosine; by Tyr-kinases (Tyr-20). The Nuclear localization signal motif lies at 22–32 (KEVGVGFATRK). Residue 127–129 (RVY) participates in a fatty acid binding.

It belongs to the calycin superfamily. Fatty-acid binding protein (FABP) family. In terms of assembly, monomer. Homodimer. Interacts with PPARG.

The protein resides in the cytoplasm. Its subcellular location is the nucleus. Functionally, lipid transport protein in adipocytes. Binds both long chain fatty acids and retinoic acid. Delivers long-chain fatty acids and retinoic acid to their cognate receptors in the nucleus. The protein is Fatty acid-binding protein, adipocyte (Fabp4) of Mus musculus (Mouse).